The following is an 85-amino-acid chain: Small ribosomal subunit protein uS17 (85 aa).

The protein belongs to the universal ribosomal protein uS17 family. As to quaternary structure, part of the 30S ribosomal subunit.

In terms of biological role, one of the primary rRNA binding proteins, it binds specifically to the 5'-end of 16S ribosomal RNA. The sequence is that of Small ribosomal subunit protein uS17 from Aggregatibacter actinomycetemcomitans (Actinobacillus actinomycetemcomitans).